The sequence spans 364 residues: UDP-N-acetylglucosamine--N-acetylmuramyl-(pentapeptide) pyrophosphoryl-undecaprenol N-acetylglucosamine transferase (364 aa).

Residues 19-21 (TGG), Asn-131, Arg-167, Ser-195, Ile-250, and Gln-295 contribute to the UDP-N-acetyl-alpha-D-glucosamine site.

This sequence belongs to the glycosyltransferase 28 family. MurG subfamily.

The protein resides in the cell inner membrane. It catalyses the reaction di-trans,octa-cis-undecaprenyl diphospho-N-acetyl-alpha-D-muramoyl-L-alanyl-D-glutamyl-meso-2,6-diaminopimeloyl-D-alanyl-D-alanine + UDP-N-acetyl-alpha-D-glucosamine = di-trans,octa-cis-undecaprenyl diphospho-[N-acetyl-alpha-D-glucosaminyl-(1-&gt;4)]-N-acetyl-alpha-D-muramoyl-L-alanyl-D-glutamyl-meso-2,6-diaminopimeloyl-D-alanyl-D-alanine + UDP + H(+). It participates in cell wall biogenesis; peptidoglycan biosynthesis. In terms of biological role, cell wall formation. Catalyzes the transfer of a GlcNAc subunit on undecaprenyl-pyrophosphoryl-MurNAc-pentapeptide (lipid intermediate I) to form undecaprenyl-pyrophosphoryl-MurNAc-(pentapeptide)GlcNAc (lipid intermediate II). The sequence is that of UDP-N-acetylglucosamine--N-acetylmuramyl-(pentapeptide) pyrophosphoryl-undecaprenol N-acetylglucosamine transferase from Xylella fastidiosa (strain Temecula1 / ATCC 700964).